A 155-amino-acid polypeptide reads, in one-letter code: Protein SprT-like (155 aa).

One can recognise a SprT-like domain in the interval 7–145 (QRHMEEVSLQ…GSCGGKLIQT (139 aa)). Residue H67 coordinates Zn(2+). E68 is a catalytic residue. H71 lines the Zn(2+) pocket.

It belongs to the SprT family. Requires Zn(2+) as cofactor.

The protein localises to the cytoplasm. This Listeria monocytogenes serovar 1/2a (strain ATCC BAA-679 / EGD-e) protein is Protein SprT-like.